The sequence spans 470 residues: Acyltransferase BOA11 (470 aa).

The active-site Proton acceptor is the His-156.

Belongs to the plant acyltransferase family.

It functions in the pathway polyketide biosynthesis. In terms of biological role, acyltransferase; part of the gene cluster B that mediates the biosynthesis of botcinic acid and its botcinin derivatives, acetate-derived polyketides that contribute to virulence when combined with the sesquiterpene botrydial. Botcinic acid and its derivatives have been shown to induce chlorosis and necrosis during host plant infection, but also have antifungal activities. Two polyketide synthases, BOA6 and BOA9, are involved in the biosynthesis of botcinins. BOA6 mediates the formation of the per-methylated tetraketide core by condensation of four units of malonyl-CoA with one unit of acetyl-CoA, which would be methylated in activated methylene groups to yield a bicyclic acid intermediate that could then either be converted to botrylactone derivatives or lose the starter acetate unit through a retro-Claisen type C-C bond cleavage to yield botcinin derivatives. The second polyketide synthase, BOA9, is probably required for the biosynthesis of the tetraketide side chain of botcinins. The methyltransferase (MT) domain within BOA6 is probably responsible for the incorporation of four methyl groups. The trans-enoyl reductase BOA5 might take over the enoyl reductase function of BOA6 that misses an ER domain. The monooxygenases BOA2, BOA3 and BOA4 might be involved in further hydroxylations at C4, C5 and C8, whereas BOA7, close to BOA9, could potentially be involved in the hydroxylation at C4 in the side chain of botcinins. This Botryotinia fuckeliana (strain B05.10) (Noble rot fungus) protein is Acyltransferase BOA11.